Here is a 242-residue protein sequence, read N- to C-terminus: ATP synthase subunit a (242 aa).

The next 6 helical transmembrane spans lie at 29 to 49 (SAVA…TAFV), 84 to 104 (FFPL…LGMV), 114 to 134 (IIVT…YGIY), 140 to 160 (FFSL…MVII), 181 to 201 (VAGH…TWLF), and 206 to 226 (IALV…QAYI).

Belongs to the ATPase A chain family. F-type ATPases have 2 components, CF(1) - the catalytic core - and CF(0) - the membrane proton channel. CF(1) has five subunits: alpha(3), beta(3), gamma(1), delta(1), epsilon(1). CF(0) has three main subunits: a(1), b(2) and c(9-12). The alpha and beta chains form an alternating ring which encloses part of the gamma chain. CF(1) is attached to CF(0) by a central stalk formed by the gamma and epsilon chains, while a peripheral stalk is formed by the delta and b chains.

It localises to the cell inner membrane. Key component of the proton channel; it plays a direct role in the translocation of protons across the membrane. This chain is ATP synthase subunit a, found in Orientia tsutsugamushi (strain Ikeda) (Rickettsia tsutsugamushi).